Reading from the N-terminus, the 1589-residue chain is Centrosomal protein of 170 kDa protein B (1589 aa).

The region spanning 23–73 (IFVGREECELMLQSRSVDKQHAVINYDQDRDEHWVKDLGSLNGTFVNDMRI) is the FHA domain. Disordered regions lie at residues 130 to 261 (RSEA…GAAP), 287 to 309 (ITKF…EMVS), 325 to 388 (LLHR…RLQR), and 409 to 583 (FDED…EVEE). Basic and acidic residues-rich tracts occupy residues 147–156 (RPEKGDRRPG) and 243–253 (PAHEMPTKDAE). The span at 330-344 (GPGDDRHSTKSDLPV) shows a compositional bias: basic and acidic residues. Residues Ser360 and Ser421 each carry the phosphoserine modification. Basic and acidic residues-rich tracts occupy residues 430–446 (PKAD…RDRP) and 467–476 (LKREKTEERL). A compositionally biased stretch (low complexity) spans 478 to 489 (SPSPASRTPARP). A phosphoserine mark is found at Ser480 and Ser492. Over residues 520–530 (EKVPPVLPAPL) the composition is skewed to pro residues. Ser536 is subject to Phosphoserine. Over residues 538–548 (VGPPTPPPAPT) the composition is skewed to pro residues. Phosphothreonine is present on Thr542. Residues Ser597, Ser619, Ser655, Ser711, Ser721, Ser746, Ser748, Ser751, Ser753, Ser772, Ser829, Ser853, Ser954, Ser972, Ser986, and Ser988 each carry the phosphoserine modification. Disordered stretches follow at residues 598–895 (PELS…LQDL), 934–1316 (DAEC…PYGF), 1350–1374 (DGDT…TPAS), and 1532–1552 (AQPG…PASA). The segment covering 711-722 (SPAGPESSRRSG) has biased composition (low complexity). A compositionally biased stretch (polar residues) spans 957–972 (DTASTVSLRSGKSGPS). Over residues 1029–1038 (SAIRRGHRPR) the composition is skewed to basic residues. Residues Ser1135, Ser1179, and Ser1199 each carry the phosphoserine modification. Residues 1221-1230 (AANTATTTGP) show a composition bias toward polar residues. The segment covering 1286–1301 (PRAGSSSRARSRAPGP) has biased composition (low complexity). Thr1304 is subject to Phosphothreonine. Ser1356 and Ser1362 each carry phosphoserine. A compositionally biased stretch (polar residues) spans 1363 to 1374 (ASLSNMPSTPAS). Low complexity predominate over residues 1542 to 1552 (AAQSPPSPASA). Ser1545 and Ser1548 each carry phosphoserine.

Belongs to the CEP170 family.

The protein resides in the cytoplasm. It is found in the cytoskeleton. Functionally, plays a role in microtubule organization. The chain is Centrosomal protein of 170 kDa protein B (CEP170B) from Homo sapiens (Human).